Consider the following 870-residue polypeptide: MANDVVLTPMMKQFFELKAKHPDAIMLFRCGDFYETYSEDAIVASEILGITLTKRANGQAKSVEMAGFPFHALDTYLPKLVRAGKRVAICDQLEDPKMTKKLVKRGITELVTPGVAINDNVLSYKENNFLAAVHFGKASCGVAFLDISTGEFLTAEGPFDYIDKLLNNFAPKEVLFERGKRGMFEGNFGSKFFTFELDDWVFNESSSREKLLKHFETKNLKGFGVEHLKNGIVASGAILQYLNMTQHYQIGHITSLSRIEEDRYVRLDKFTVRSLELIGSMNEGGTSLLDVIDRTISPMGARLLKRWVVFPLKDEKPVNERLDVVEYFFREPDFKEFIEEKLHLIGDLERIVSKAAVGRISPREVVQLKVALQAIEPIKNACLNADNGSLRRIGEQLNLCLSIREKIAKEVKNDPPLLVNKGGVIADGVNAELDELRQIAFSGKDYLLKVQQRESELTGIPSLKIAYNNVFGYYIEVRNTHKDKVPADWIRKQTLVNAERYITQELKEYEEKILGAEDKILVLETKLYNELVVALAEFIPAIQINASQIARLDCLLAFANVAKENNYIRPVVEDSEVIDIRQGRHPVIEKQLPVGEKYIANDVFLDSETQQIIIITGPNMAGKSALLRQTALITLLAQMGSFVPAESARIGMVDKIFTRVGASDNISVGESTFMVEMNEAANILNNLSSRSLVLFDELGRGTSTYDGISIAWAIVEHIHEHPKAKARTLFATHYHELNEMEKSFKRIKNYNVSVKEIDNKVIFLRKLERGGSEHSFGIHVAKMAGMPKSIVKRANDILHQLETDNRQQGIAKPTAEIASGRSGMQLSFFQLDDPVLSQIRDEILNLDVNNLTPLEALNKLNDIKKIVKGK.

617–624 (GPNMAGKS) lines the ATP pocket.

It belongs to the DNA mismatch repair MutS family.

This protein is involved in the repair of mismatches in DNA. It is possible that it carries out the mismatch recognition step. This protein has a weak ATPase activity. This chain is DNA mismatch repair protein MutS, found in Phocaeicola vulgatus (strain ATCC 8482 / DSM 1447 / JCM 5826 / CCUG 4940 / NBRC 14291 / NCTC 11154) (Bacteroides vulgatus).